A 527-amino-acid polypeptide reads, in one-letter code: Berberine bridge enzyme-like 5 (527 aa).

The first 19 residues, 1-19 (MKALFSVLCLVLLVSILRA), serve as a signal peptide directing secretion. A disulfide bridge connects residues Cys32 and Cys95. 2 N-linked (GlcNAc...) asparagine glycosylation sites follow: Asn35 and Asn52. In terms of domain architecture, FAD-binding PCMH-type spans 73–247 (NYQKLVAIVA…LSWKINLVEV (175 aa)). The 6-(S-cysteinyl)-8alpha-(pros-histidyl)-FAD (His-Cys) cross-link spans 110–172 (HDYEGLSYTS…QTLAFPAGVC (63 aa)). An N-linked (GlcNAc...) asparagine glycan is attached at Asn341.

Belongs to the oxygen-dependent FAD-linked oxidoreductase family. The cofactor is FAD. In terms of processing, the FAD cofactor is bound via a bicovalent 6-S-cysteinyl, 8alpha-N1-histidyl FAD linkage.

The protein resides in the secreted. Its subcellular location is the cell wall. Its function is as follows. Probable flavin-dependent oxidoreductase. The chain is Berberine bridge enzyme-like 5 from Arabidopsis thaliana (Mouse-ear cress).